The sequence spans 490 residues: Cardiolipin synthase A (490 aa).

Helical transmembrane passes span 20 to 40 (LGLL…HAVL) and 49 to 69 (IAWA…YLVF). 2 consecutive PLD phosphodiesterase domains span residues 229–256 (VNFR…GVEY) and 403–430 (QPGF…DNRS). Catalysis depends on residues H234, K236, D241, H408, K410, and D415.

The protein belongs to the phospholipase D family. Cardiolipin synthase subfamily. ClsA sub-subfamily.

Its subcellular location is the cell inner membrane. It carries out the reaction 2 a 1,2-diacyl-sn-glycero-3-phospho-(1'-sn-glycerol) = a cardiolipin + glycerol. Its function is as follows. Catalyzes the reversible phosphatidyl group transfer from one phosphatidylglycerol molecule to another to form cardiolipin (CL) (diphosphatidylglycerol) and glycerol. The polypeptide is Cardiolipin synthase A (Pseudomonas aeruginosa (strain LESB58)).